A 78-amino-acid chain; its full sequence is DNA-directed RNA polymerase subunit omega (78 aa).

Belongs to the RNA polymerase subunit omega family. As to quaternary structure, in cyanobacteria the RNAP catalytic core is composed of 2 alpha, 1 beta, 1 beta', 1 gamma and 1 omega subunit. When a sigma factor is associated with the core the holoenzyme is formed, which can initiate transcription.

It carries out the reaction RNA(n) + a ribonucleoside 5'-triphosphate = RNA(n+1) + diphosphate. Functionally, promotes RNA polymerase assembly. Latches the N- and C-terminal regions of the beta' subunit thereby facilitating its interaction with the beta and alpha subunits. This Prochlorococcus marinus (strain MIT 9515) protein is DNA-directed RNA polymerase subunit omega.